Consider the following 294-residue polypeptide: Deubiquitinase OTUD6B (294 aa).

An N-acetylmethionine modification is found at M1. The OTU domain occupies 148–285 (LEIKQIPSDG…GEHYNSVTRL (138 aa)). Residues 153–159 (IPSDGHC) form a cys-loop region. D156 is an active-site residue. Catalysis depends on C159, which acts as the Nucleophile. Residues 220–230 (IVNTAAWGGQL) are variable-loop. The segment at 268–278 (YMRHAYGLGEH) is his-loop. H278 is an active-site residue.

In terms of assembly, interacts with the eukaryotic translation initiation factor 4F complex. In terms of tissue distribution, ubiquitously expressed. Expression is observed in several organ systems including the cardiovascular, digestive, central and peripheral nervous and musculoskeletal systems.

It catalyses the reaction Thiol-dependent hydrolysis of ester, thioester, amide, peptide and isopeptide bonds formed by the C-terminal Gly of ubiquitin (a 76-residue protein attached to proteins as an intracellular targeting signal).. Deubiquitinating enzyme that may play a role in the ubiquitin-dependent regulation of protein synthesis, downstream of mTORC1. May associate with the protein synthesis initiation complex and modify its ubiquitination to repress translation. May also repress DNA synthesis and modify different cellular targets thereby regulating cell growth and proliferation. May also play a role in proteasome assembly and function. The sequence is that of Deubiquitinase OTUD6B from Mus musculus (Mouse).